We begin with the raw amino-acid sequence, 250 residues long: Cobalt transport protein CbiM (250 aa).

Residues 1-27 form the signal peptide; sequence MKKPLFFIASACVTIYILFALSPSVYA. Helical transmembrane passes span 33–53, 70–90, 102–122, 134–154, 168–188, and 208–228; these read GFLP…FFLV, LLLA…IPSV, LGAL…VLLF, TLGA…YVLF, VFLA…IQLA, and IFAV…VVVW.

It belongs to the CbiM family. In terms of assembly, forms an energy-coupling factor (ECF) transporter complex composed of an ATP-binding protein (A component, CbiO), a transmembrane protein (T component, CbiQ) and 2 possible substrate-capture proteins (S components, CbiM and CbiN) of unknown stoichimetry.

The protein localises to the cell membrane. It participates in cofactor biosynthesis; adenosylcobalamin biosynthesis. Its function is as follows. Part of the energy-coupling factor (ECF) transporter complex CbiMNOQ involved in cobalt import. The protein is Cobalt transport protein CbiM of Anoxybacillus flavithermus (strain DSM 21510 / WK1).